Consider the following 210-residue polypeptide: ATP-dependent Clp protease proteolytic subunit (210 aa).

The Nucleophile role is filled by Ser-106. Residue His-131 is part of the active site.

It belongs to the peptidase S14 family. As to quaternary structure, fourteen ClpP subunits assemble into 2 heptameric rings which stack back to back to give a disk-like structure with a central cavity, resembling the structure of eukaryotic proteasomes.

The protein resides in the cytoplasm. It catalyses the reaction Hydrolysis of proteins to small peptides in the presence of ATP and magnesium. alpha-casein is the usual test substrate. In the absence of ATP, only oligopeptides shorter than five residues are hydrolyzed (such as succinyl-Leu-Tyr-|-NHMec, and Leu-Tyr-Leu-|-Tyr-Trp, in which cleavage of the -Tyr-|-Leu- and -Tyr-|-Trp bonds also occurs).. In terms of biological role, cleaves peptides in various proteins in a process that requires ATP hydrolysis. Has a chymotrypsin-like activity. Plays a major role in the degradation of misfolded proteins. The chain is ATP-dependent Clp protease proteolytic subunit from Bradyrhizobium sp. (strain BTAi1 / ATCC BAA-1182).